The primary structure comprises 430 residues: Pre-B-cell leukemia transcription factor 1 (430 aa).

The disordered stretch occupies residues 1–40 (MDEQPRLMHSHAGVGMAGHPGLSQHLQDGAGGTEGEGGRK). The 195-residue stretch at 38 to 232 (GRKQDIGDIL…VMILRSRFLD (195 aa)) folds into the PBC domain. Residues 45–124 (DILQQIMTIT…EGVAGPEKGG (80 aa)) form a PBC-A region. Residues 127–232 (AAAAAAAAAS…VMILRSRFLD (106 aa)) are PBC-B. The homeobox; TALE-type DNA-binding region spans 233–295 (ARRKRRNFNK…NKRIRYKKNI (63 aa)). Disordered regions lie at residues 317-338 (SAHG…SSSF) and 395-430 (SPQG…DTSN). A compositionally biased stretch (low complexity) spans 323–338 (ANSPSTPNSAGSSSSF). Polar residues predominate over residues 407-418 (DATTPSSVTSPT).

This sequence belongs to the TALE/PBX homeobox family. In terms of assembly, forms a heterodimer with MEIS1 which binds DNA. The PBX1-MEIS1 heterodimer binds a cAMP-responsive sequence in CYP17. It also binds a consensus region in the SOX3 promoter. PBX1 forms heterotrimers with MEIS1 and a number of HOX proteins including HOXA9, HOXD4, HOXD9 and HOXD10. Forms heterodimers with HOXA1, HOXA5, HOXB7 and HOXB8 which bind the 5'-TGATTGAT-3' consensus sequence. Also forms heterodimers with HOXA5, HOXB7, HOXB8, HOXC8 and HOXD4 which bind the 5'-ATCAATCAA-3' consensus sequence. Interacts with PBXIP1. Interacts with TLX1. Interacts with FOXC1. Interacts with MN1. As to quaternary structure, interacts with MEIS2 isoform 4, SP1, SP3 and KLF4. Part of a PDX1:PBX1b:MEIS2B complex; PBX1b recruits MEIS2B to the complex. In terms of tissue distribution, expressed in the kidney. Expressed in the endothelial cells of the glomeruli and interstitium (at protein level). Expressed in all tissues except in cells of the B and T lineage. Expressed strongly in kidney and brain.

The protein resides in the nucleus. Its function is as follows. Transcription factor which binds the DNA sequence 5'-TGATTGAT-3' as part of a heterodimer with HOX proteins such as HOXA1, HOXA5, HOXB7 and HOXB8. Binds to the DNA sequence 5'-TGATTGAC-3' in complex with a nuclear factor which is not a class I HOX protein. Has also been shown to bind the DNA sequence 5'-ATCAATCAA-3' cooperatively with HOXA5, HOXB7, HOXB8, HOXC8 and HOXD4. Acts as a transcriptional activator of PF4 in complex with MEIS1. Also activates transcription of SOX3 in complex with MEIS1 by binding to the 5'-TGATTGAC-3' consensus sequence. In natural killer cells, binds to the NFIL3 promoter and acts as a transcriptional activator of NFIL3, promoting natural killer cell development. Plays a role in the cAMP-dependent regulation of CYP17A1 gene expression via its cAMP-regulatory sequence (CRS1). Probably in complex with MEIS2, involved in transcriptional regulation by KLF4. Acts as a transcriptional activator of NKX2-5 and a transcriptional repressor of CDKN2B. Together with NKX2-5, required for spleen development through a mechanism that involves CDKN2B repression. Functionally, as part of a PDX1:PBX1b:MEIS2B complex in pancreatic acinar cells, is involved in the transcriptional activation of the ELA1 enhancer; the complex binds to the enhancer B element and cooperates with the transcription factor 1 complex (PTF1) bound to the enhancer A element. This Homo sapiens (Human) protein is Pre-B-cell leukemia transcription factor 1 (PBX1).